The sequence spans 318 residues: D-alanine--D-alanine ligase (318 aa).

One can recognise an ATP-grasp domain in the interval 101-307 (KKIIQYEGLP…FPDLIEKLVE (207 aa)). Residue 135–190 (CREMGLPLVVKAPTQGSTIGMSFVHKEEDMAGALELAYDYDPVALVEQFIRGTEVT) coordinates ATP. Mg(2+)-binding residues include Asp261, Glu274, and Asn276.

The protein belongs to the D-alanine--D-alanine ligase family. Mg(2+) serves as cofactor. Requires Mn(2+) as cofactor.

The protein resides in the cytoplasm. It catalyses the reaction 2 D-alanine + ATP = D-alanyl-D-alanine + ADP + phosphate + H(+). The protein operates within cell wall biogenesis; peptidoglycan biosynthesis. Functionally, cell wall formation. This chain is D-alanine--D-alanine ligase, found in Pelotomaculum thermopropionicum (strain DSM 13744 / JCM 10971 / SI).